A 279-amino-acid polypeptide reads, in one-letter code: Rhamnulose-1-phosphate aldolase (279 aa).

The active site involves E115. Positions 138, 140, and 209 each coordinate Zn(2+).

The protein belongs to the aldolase class II family. RhaD subfamily. The cofactor is Zn(2+).

Its subcellular location is the cytoplasm. The catalysed reaction is L-rhamnulose 1-phosphate = (S)-lactaldehyde + dihydroxyacetone phosphate. Its pathway is carbohydrate degradation; L-rhamnose degradation; glycerone phosphate from L-rhamnose: step 3/3. Catalyzes the reversible cleavage of L-rhamnulose-1-phosphate to dihydroxyacetone phosphate (DHAP) and L-lactaldehyde. The protein is Rhamnulose-1-phosphate aldolase of Enterococcus faecalis (strain ATCC 700802 / V583).